The following is a 102-amino-acid chain: Small ribosomal subunit protein uS10 (102 aa).

Belongs to the universal ribosomal protein uS10 family. In terms of assembly, part of the 30S ribosomal subunit.

In terms of biological role, involved in the binding of tRNA to the ribosomes. This chain is Small ribosomal subunit protein uS10, found in Dehalococcoides mccartyi (strain ATCC BAA-2100 / JCM 16839 / KCTC 5957 / BAV1).